The primary structure comprises 283 residues: 2-dehydro-3-deoxyphosphooctonate aldolase (283 aa).

The protein belongs to the KdsA family.

It localises to the cytoplasm. The catalysed reaction is D-arabinose 5-phosphate + phosphoenolpyruvate + H2O = 3-deoxy-alpha-D-manno-2-octulosonate-8-phosphate + phosphate. The protein operates within carbohydrate biosynthesis; 3-deoxy-D-manno-octulosonate biosynthesis; 3-deoxy-D-manno-octulosonate from D-ribulose 5-phosphate: step 2/3. Its pathway is bacterial outer membrane biogenesis; lipopolysaccharide biosynthesis. This Prochlorococcus marinus (strain MIT 9313) protein is 2-dehydro-3-deoxyphosphooctonate aldolase.